The chain runs to 526 residues: Protein mono-ADP-ribosyltransferase PARP3 (526 aa).

Residues 1–55 (MAPKRRAPPASQPADGGKKAKGGQEEEEDAWSSALNALKTAPREKPPATIDGQCP) are disordered. Residues 61-151 (DAKVYEDYDC…DNFVAQPGKY (91 aa)) form the WGR domain. Residues 183–301 (PCALDETTQK…DIEVAQSLQA (119 aa)) enclose the PARP alpha-helical domain. In terms of domain architecture, PARP catalytic spans 312–526 (HPLDRDYALL…RIRYLVQLHF (215 aa)).

This sequence belongs to the ARTD/PARP family.

The protein resides in the nucleus. It localises to the chromosome. Its subcellular location is the cytoplasm. The protein localises to the cytoskeleton. It is found in the microtubule organizing center. The protein resides in the centrosome. It localises to the centriole. The catalysed reaction is L-aspartyl-[protein] + NAD(+) = 4-O-(ADP-D-ribosyl)-L-aspartyl-[protein] + nicotinamide. It catalyses the reaction L-glutamyl-[protein] + NAD(+) = 5-O-(ADP-D-ribosyl)-L-glutamyl-[protein] + nicotinamide. The enzyme catalyses L-lysyl-[protein] + NAD(+) = N(6)-(ADP-D-ribosyl)-L-lysyl-[protein] + nicotinamide + H(+). Its function is as follows. Mono-ADP-ribosyltransferase that mediates mono-ADP-ribosylation of target proteins and plays a key role in the response to DNA damage. Mediates mono-ADP-ribosylation of glutamate, aspartate or lysine residues on target proteins. In contrast to PARP1 and PARP2, it is not able to mediate poly-ADP-ribosylation. Involved in DNA repair by mediating mono-ADP-ribosylation of a limited number of acceptor proteins involved in chromatin architecture and in DNA metabolism, such as histone H2B, XRCC5 and XRCC6. ADP-ribosylation follows DNA damage and appears as an obligatory step in a detection/signaling pathway leading to the reparation of DNA strand breaks. Involved in single-strand break repair by catalyzing mono-ADP-ribosylation of histone H2B on 'Glu-2' (H2BE2ADPr) of nucleosomes containing nicked DNA. Cooperates with the XRCC5-XRCC6 (Ku80-Ku70) heterodimer to limit end-resection thereby promoting accurate NHEJ. Associates with a number of DNA repair factors and is involved in the response to exogenous and endogenous DNA strand breaks. Together with APLF, promotes the retention of the LIG4-XRCC4 complex on chromatin and accelerate DNA ligation during non-homologous end-joining (NHEJ). In addition to proteins, also able to ADP-ribosylate DNA: mediates DNA mono-ADP-ribosylation of DNA strand break termini via covalent addition of a single ADP-ribose moiety to a 5'- or 3'-terminal phosphate residues in DNA containing multiple strand breaks. This Gallus gallus (Chicken) protein is Protein mono-ADP-ribosyltransferase PARP3.